The primary structure comprises 387 residues: EARP-interacting protein homolog (387 aa).

WD repeat units follow at residues 132–172, 182–222, 226–266, 270–310, and 345–385; these read TAHG…SKAV, KGQL…QIYC, AHGQ…DPVK, EHSH…SEPF, and EHED…KYHI.

Belongs to the WD repeat EIPR1 family.

The sequence is that of EARP-interacting protein homolog from Gekko japonicus (Schlegel's Japanese gecko).